The sequence spans 414 residues: Probable mannose-1-phosphate guanyltransferase (414 aa).

Belongs to the transferase hexapeptide repeat family.

The protein resides in the cytoplasm. Its subcellular location is the nucleus. It carries out the reaction alpha-D-mannose 1-phosphate + GTP + H(+) = GDP-alpha-D-mannose + diphosphate. It functions in the pathway nucleotide-sugar biosynthesis; GDP-alpha-D-mannose biosynthesis; GDP-alpha-D-mannose from alpha-D-mannose 1-phosphate (GTP route): step 1/1. Its function is as follows. Involved in cell wall synthesis where it is required for glycosylation. This Schizosaccharomyces pombe (strain 972 / ATCC 24843) (Fission yeast) protein is Probable mannose-1-phosphate guanyltransferase.